The primary structure comprises 234 residues: Phosphoribosylaminoimidazole-succinocarboxamide synthase (234 aa).

This sequence belongs to the SAICAR synthetase family.

It catalyses the reaction 5-amino-1-(5-phospho-D-ribosyl)imidazole-4-carboxylate + L-aspartate + ATP = (2S)-2-[5-amino-1-(5-phospho-beta-D-ribosyl)imidazole-4-carboxamido]succinate + ADP + phosphate + 2 H(+). It participates in purine metabolism; IMP biosynthesis via de novo pathway; 5-amino-1-(5-phospho-D-ribosyl)imidazole-4-carboxamide from 5-amino-1-(5-phospho-D-ribosyl)imidazole-4-carboxylate: step 1/2. The sequence is that of Phosphoribosylaminoimidazole-succinocarboxamide synthase from Streptococcus pyogenes serotype M18 (strain MGAS8232).